The chain runs to 435 residues: Tol-Pal system protein TolB (435 aa).

Residues Met1–Ala20 form the signal peptide.

It belongs to the TolB family. The Tol-Pal system is composed of five core proteins: the inner membrane proteins TolA, TolQ and TolR, the periplasmic protein TolB and the outer membrane protein Pal. They form a network linking the inner and outer membranes and the peptidoglycan layer.

Its subcellular location is the periplasm. Its function is as follows. Part of the Tol-Pal system, which plays a role in outer membrane invagination during cell division and is important for maintaining outer membrane integrity. The polypeptide is Tol-Pal system protein TolB (Francisella tularensis subsp. holarctica (strain LVS)).